The sequence spans 508 residues: MWELVALLLLTLAYLFWPKRRCPGAKYPKSLLSLPLVGSLPFLPRHGHMHNNFFKLQKKYGPIYSVRMGTKTTVIVGHHQLAKEVLIKKGKDFSGRPQVTTLDILSNNRKGIAFADYGAHWQLHRRLAMATFALFKDGDQKLEKIICQEISTLCDMLATHNGQTIDISFPVFVAITNVISLICFNISYKNGDPELKIVHNYNEGIIDSLGKESLVDLFPWLKVFPNKTLEKLKRHVKTRNDLLTKIFENYKEKFRSDSITNMLDVLMQAKMNSDNGNAGPDQDSELLSDNHILTTIGDIFGAGVETTTSVVKWIVAFLLHNPQVKKKLYEGIDQNVGFSRTPTISDRNRLLLLEATIREVLRIRPVAPMLIPHKANVDSSIGEFAVDKGTHVIINLWALHHNEKEWHQPDQFMPERFLNPAGTQLISPSLSYLPFGAGPRSCIGEILARQELFLIMAWLLQRFDLEVPDDGQLPSLEGNPKVVFLIDSFKVKIKVRQAWREAQAEGST.

Residue N202 coordinates substrate. C442 lines the heme pocket.

The protein belongs to the cytochrome P450 family. It depends on heme as a cofactor.

The protein resides in the endoplasmic reticulum membrane. Its subcellular location is the microsome membrane. It carries out the reaction a C21-steroid + reduced [NADPH--hemoprotein reductase] + O2 = a 17alpha-hydroxy-C21-steroid + oxidized [NADPH--hemoprotein reductase] + H2O + H(+). The enzyme catalyses progesterone + reduced [NADPH--hemoprotein reductase] + O2 = 17alpha-hydroxyprogesterone + oxidized [NADPH--hemoprotein reductase] + H2O + H(+). The catalysed reaction is pregnenolone + reduced [NADPH--hemoprotein reductase] + O2 = 17alpha-hydroxypregnenolone + oxidized [NADPH--hemoprotein reductase] + H2O + H(+). It catalyses the reaction 17alpha-hydroxypregnenolone + reduced [NADPH--hemoprotein reductase] + O2 = 3beta-hydroxyandrost-5-en-17-one + acetate + oxidized [NADPH--hemoprotein reductase] + H2O + 2 H(+). The protein operates within steroid hormone biosynthesis. It participates in steroid biosynthesis; glucocorticoid biosynthesis. Regulated predominantly by intracellular cAMP levels. The 17,20-lyase activity is stimulated by cytochrome b5, which acts as an allosteric effector increasing the Vmax of the lyase activity. In terms of biological role, a cytochrome P450 monooxygenase involved in corticoid and androgen biosynthesis. Catalyzes 17-alpha hydroxylation of C21 steroids, which is common for both pathways. A second oxidative step, required only for androgen synthesis, involves an acyl-carbon cleavage. Hydroxylates pregnenolone to form 17-alpha pregnenolone, followed by the cleavage of the C17-C20 bond to form dehydroepiandrosterone (DHEA). Has 17-alpha hydroxylase activity toward progesterone. The 17-alpha hydroxy intermediates, as part of adrenal glucocorticoids biosynthesis pathway, are precursors of cortisol. Mechanistically, uses molecular oxygen inserting one oxygen atom into a substrate, and reducing the second into a water molecule, with two electrons provided by NADPH via cytochrome P450 reductase (CPR; NADPH-ferrihemoprotein reductase). This chain is Steroid 17-alpha-hydroxylase/17,20 lyase (CYP17A1), found in Papio hamadryas ursinus (Chacma baboon).